The following is a 597-amino-acid chain: MASTFSATSSMGSSLAPPSNRLSSFVSISSSSFGRTQSIAQRKARFPKIYAAKQLHFNKDGTAIKKLQAGVNKLADLVGVTLGPKGRNVVLESKYGSPRIVNDGVTVAREVELEDPVENIGAKLVRQAASKTNDLAGDGTTTSVVLAQGLIAEGVKVVAAGANPVLITRGIEKTTKALVAELKKMSKEVEDSELADVAAVSAGNNYEVGNMIAEAMAKVGRKGVVTLEEGKSAENSLYVVEGMQFDRGYISPYFVTDSEKMCAEYENCKLFLVDKKITNARDIISILEDAIKGGYPLLIIAEDIEQEPLATLVVNKLRGTIKVAALKAPGFGERKSQYLDDIAALTGATVIREEVGLQLEKVGPEVLGNAGKVVLTKDTTTIVGDGSTEEVVKKRVEQIKNLIEAAEQDYEKEKLNERIAKLSGGVAVIQVGAQTETELKEKKLRVEDALNATKAAVEEGIVVGGGCTLLRLASKVDAIKETLANDEEKVGADIVKKALSYPLKLIAKNAGVNGSVVSEKVLSSDNPKHGYNAATGKYEDLMAAGIIDPTKVVRCCLEHASSVAKTFLMSDCVVVEIKEPESAAPAGNPMDNSGYGF.

The interval 1–20 is disordered; it reads MASTFSATSSMGSSLAPPSN. The transit peptide at 1–29 directs the protein to the chloroplast; sequence MASTFSATSSMGSSLAPPSNRLSSFVSIS. Phosphoserine occurs at positions 97 and 474. Residues 387–489 are a coiled coil; that stretch reads STEEVVKKRV…KETLANDEEK (103 aa).

This sequence belongs to the chaperonin (HSP60) family. As to quaternary structure, part of the Cpn60 complex composed of 7 alpha and 7 beta subunits. Can also form a complex composed of 14 beta subunits only. Both complexes show ATPase activity. The Cpn60 complex interacts with the Cpn10 complex.

The protein localises to the plastid. Its subcellular location is the chloroplast. Functionally, involved in protein assisted folding. This chain is Chaperonin 60 subunit beta 3, chloroplastic (CPN60B3), found in Arabidopsis thaliana (Mouse-ear cress).